The primary structure comprises 339 residues: Leucine-rich repeat-containing protein 75A (339 aa).

The segment at 1–25 is disordered; sequence MGTRQTKGSLAERASPGAAPGPRRE. Residues 11 to 21 show a composition bias toward low complexity; sequence AERASPGAAPG. 2 LRR repeats span residues 203–216 and 228–241; these read VDSV…LTDD and LPRL…GNRL. The disordered stretch occupies residues 294–339; it reads LPTILELGEGPGTGEEAREGTDQQDPIGSPVTPARGQESTECVIQT. A Phosphoserine modification is found at Ser-322. Phosphothreonine is present on Thr-325. Polar residues predominate over residues 330–339; sequence QESTECVIQT.

Belongs to the LRRC75 family.

This is Leucine-rich repeat-containing protein 75A (Lrrc75a) from Mus musculus (Mouse).